Here is a 739-residue protein sequence, read N- to C-terminus: Gamma-tubulin complex component 4 homolog (739 aa).

This sequence belongs to the TUBGCP family.

The protein localises to the cytoplasm. The protein resides in the cytoskeleton. It is found in the microtubule organizing center. Functionally, gamma-tubulin complex is necessary for microtubule nucleation at the microtubule organizing centers (MTOCs). This chain is Gamma-tubulin complex component 4 homolog (85P), found in Medicago truncatula (Barrel medic).